The chain runs to 1061 residues: Bifunctional cytochrome P450/NADPH--P450 reductase 1 (1061 aa).

Residues 1–475 (MKETSPIPQP…AEKAAPDEQK (475 aa)) form a cytochrome P450 region. Cys403 contributes to the heme binding site. The NADPH--P450 reductase stretch occupies residues 476 to 1061 (EKTEAKGASV…MYAKDVWAGI (586 aa)). Residues 493 to 632 (LLVLYGSDTG…QLDEWKKSMW (140 aa)) enclose the Flavodoxin-like domain. FMN contacts are provided by residues 499-504 (SDTGTA), 546-549 (SYNG), 580-582 (CGD), and 588-590 (TYQ). Residues 671 to 904 (YEASHASIAE…RTPESRFQLP (234 aa)) form the FAD-binding FR-type domain.

This sequence in the N-terminal section; belongs to the cytochrome P450 family. FAD serves as cofactor. The cofactor is FMN. Heme b is required as a cofactor.

The protein resides in the cytoplasm. It carries out the reaction an organic molecule + reduced [NADPH--hemoprotein reductase] + O2 = an alcohol + oxidized [NADPH--hemoprotein reductase] + H2O + H(+). The enzyme catalyses 2 oxidized [cytochrome P450] + NADPH = 2 reduced [cytochrome P450] + NADP(+) + H(+). Functionally, functions as a fatty acid monooxygenase. Catalyzes hydroxylation of a range of long-chain fatty acids, with a preference for long-chain unsaturated and branched-chain fatty acids over saturated fatty acids. Hydroxylation of myristic acid occurs mainly at the omega-2 position. Also displays a NADPH-dependent reductase activity in the C-terminal domain, which allows electron transfer from NADPH to the heme iron of the cytochrome P450 N-terminal domain. Is also able to catalyze efficient oxidation of sodium dodecyl sulfate (SDS). The sequence is that of Bifunctional cytochrome P450/NADPH--P450 reductase 1 from Bacillus subtilis (strain 168).